We begin with the raw amino-acid sequence, 242 residues long: Orotidine 5'-phosphate decarboxylase (242 aa).

Residues aspartate 22, lysine 44, aspartate 71–threonine 80, threonine 130, arginine 190, glutamine 199, glycine 219, and arginine 220 each bind substrate. The active-site Proton donor is the lysine 73.

The protein belongs to the OMP decarboxylase family. Type 1 subfamily. In terms of assembly, homodimer.

It catalyses the reaction orotidine 5'-phosphate + H(+) = UMP + CO2. Its pathway is pyrimidine metabolism; UMP biosynthesis via de novo pathway; UMP from orotate: step 2/2. Functionally, catalyzes the decarboxylation of orotidine 5'-monophosphate (OMP) to uridine 5'-monophosphate (UMP). The protein is Orotidine 5'-phosphate decarboxylase of Laribacter hongkongensis (strain HLHK9).